A 52-amino-acid polypeptide reads, in one-letter code: Conotoxin Cal9.2c (52 aa).

The propeptide occupies K1 to L6. 3 disulfide bridges follow: C14–C31, C19–C41, and C21–C46.

Expressed by the venom duct.

The protein localises to the secreted. In terms of biological role, probable neurotoxin with unknown target. Possibly targets ion channels. This Californiconus californicus (California cone) protein is Conotoxin Cal9.2c.